The sequence spans 239 residues: Probable intron-encoded endonuclease I-ZbiI (239 aa).

The protein belongs to the LAGLIDADG endonuclease family.

The protein resides in the mitochondrion. In terms of biological role, endonuclease involved in mitochondrial 21S rRNA gene intron homing. The polypeptide is Probable intron-encoded endonuclease I-ZbiI (Zygosaccharomyces bisporus).